The primary structure comprises 65 residues: MKVFVLLTLAVLLMVSADMAFAGFGCPGNQLKCNNHCKSISCRAGYCDAATLWLRCTCTDCNGKK.

Positions 1–22 are cleaved as a signal peptide; the sequence is MKVFVLLTLAVLLMVSADMAFA. Positions 24, 25, and 26 each coordinate beta-D-GlcNAc-(1-&gt;4)-Mur2Ac(oyl-L-Ala-gamma-D-Glu-L-Lys-D-Ala-D-Ala)-di-trans,octa-cis-undecaprenyl diphosphate. 4 cysteine pairs are disulfide-bonded: C26–C47, C33–C56, C37–C58, and C42–C61. The tract at residues 27–30 is binds to membrane interface; that stretch reads PGNQ. H36 contributes to the beta-D-GlcNAc-(1-&gt;4)-Mur2Ac(oyl-L-Ala-gamma-D-Glu-L-Lys-D-Ala-D-Ala)-di-trans,octa-cis-undecaprenyl diphosphate binding site. The binds to membrane interface stretch occupies residues 48–54; it reads DAATLWL. Beta-D-GlcNAc-(1-&gt;4)-Mur2Ac(oyl-L-Ala-gamma-D-Glu-L-Lys-D-Ala-D-Ala)-di-trans,octa-cis-undecaprenyl diphosphate is bound at residue C56.

Belongs to the invertebrate defensin family. In terms of tissue distribution, expressed in the mantle. Low or no expression in most of the organs analyzed, including hemocytes, heart, digestive gland, and gills.

The protein localises to the secreted. It is found in the target cell membrane. Its function is as follows. Antibacterial peptide mostly active against Gram-positive bacteria (M.lysodeikticus, S.aureus, and the marine bacteria, B.stationis, and M.maritypicum). It acts by selectively inhibiting peptidoglycan biosynthesis through complex formation with the cell wall precursor lipid II (1:1 molar ratio) thus inhibiting cell wall synthesis. It does not disrupt cell membranes. Is noticeably more potent than Cg-Defh1. It shows no or limited activities against Gram-negative bacteria and filamentous fungi. This Magallana gigas (Pacific oyster) protein is Defensin Cg-Defm.